Reading from the N-terminus, the 1590-residue chain is Defective chorion protein, FC177 isoform (1590 aa).

The signal sequence occupies residues 1 to 19; that stretch reads MRLFSLLPLLALLVVQAAG. 3 disordered regions span residues 23–60, 184–212, and 268–294; these read VTSD…PSIN, APAP…PDAP, and PAQP…EDPY. A compositionally biased stretch (polar residues) spans 32–41; sequence AGSTTNSTTD. Residues 268–280 are compositionally biased toward low complexity; that stretch reads PAQPAAAGTDAQA. 5 repeat units span residues 493–518, 519–544, 545–570, 571–596, and 597–622. Residues 493–788 form a 12 X 26 AA approximate tandem repeats, Glu, Met-rich region; the sequence is QNPMMMQQRQ…IQQQQRQMMQ (296 aa). The stretch at 623–652 is one 6; approximate repeat; it reads QNPMMMQQRQWSEEQAKIQHDQQMAQQMAQ. One copy of the 7; approximate repeat lies at 653-680; it reads QGLMMTEQRQRQWSEDQAKIQQAQQMAQ. The 8; approximate repeat unit spans residues 681 to 696; that stretch reads QTPMMMPQMQQRQWTE. A 9; approximate repeat occupies 697–720; sequence DPQMVQQMQQRQWAEDQTRMQMAQ. One copy of the 10; approximate repeat lies at 721–733; it reads QNPMMQQQRQMAE. One copy of the 11; approximate repeat lies at 734–758; that stretch reads NPQMMQQRQWSEEQTKIEQAQQMAQ. Residues 759 to 788 form a 12; approximate repeat; it reads QNQMMMQQMQQRQWSEDQAQIQQQQRQMMQ. Disordered regions lie at residues 843–875, 944–983, 1119–1221, 1261–1352, 1375–1515, and 1538–1590; these read GPQM…SKSA, RTIN…EHRV, EEDA…TKSI, PVTE…DDNN, FAQG…QATV, and EKKS…QTKA. Residues 957-977 show a composition bias toward polar residues; that stretch reads SESQKSNSNPPTTLTPAPQEQ. Residues 1119–1130 show a composition bias toward acidic residues; the sequence is EEDAQQEPMEEE. A compositionally biased stretch (basic and acidic residues) spans 1131-1148; that stretch reads QLQHDPNTEPQYNHKDFV. The span at 1151 to 1195 shows a compositional bias: low complexity; sequence TTSTASPITSTTEAATPTGSDSTSEATVTPEVTTTTSTSTTTTTE. Residues 1205 to 1221 are compositionally biased toward polar residues; sequence QQDSQAEAESSHVTKSI. Residues 1272-1288 show a composition bias toward basic and acidic residues; sequence EPSKQEDKPKVEEKVIA. Acidic residues predominate over residues 1295 to 1306; the sequence is EQEEELEEDEDS. 2 stretches are compositionally biased toward low complexity: residues 1307–1319 and 1435–1452; these read TSIS…PSPS and DSGS…TPSP. The span at 1493 to 1504 shows a compositional bias: basic residues; the sequence is QRPKKSMSKPKK. Over residues 1505–1515 the composition is skewed to low complexity; it reads QSSQVTTQATV. The span at 1554 to 1576 shows a compositional bias: basic residues; sequence TKPKSIKPVKVIKRKRLRRRQHK. Polar residues predominate over residues 1577–1590; it reads SIATTIRSPIQTKA.

The protein localises to the secreted. Functionally, required for proper assembly of the eggshell. This Drosophila melanogaster (Fruit fly) protein is Defective chorion protein, FC177 isoform.